The sequence spans 179 residues: Large ribosomal subunit protein uL6 (179 aa).

This sequence belongs to the universal ribosomal protein uL6 family. As to quaternary structure, part of the 50S ribosomal subunit.

This protein binds to the 23S rRNA, and is important in its secondary structure. It is located near the subunit interface in the base of the L7/L12 stalk, and near the tRNA binding site of the peptidyltransferase center. The protein is Large ribosomal subunit protein uL6 of Geotalea daltonii (strain DSM 22248 / JCM 15807 / FRC-32) (Geobacter daltonii).